A 254-amino-acid polypeptide reads, in one-letter code: Countin-2 (254 aa).

A signal peptide spans 1–19; sequence MMIKYITIAILFIASLVKA. Positions 22–107 constitute a Saposin B-type domain; it reads QFSLCPTCVD…EELTVCPKNQ (86 aa). 3 cysteine pairs are disulfide-bonded: cysteine 26/cysteine 103, cysteine 29/cysteine 97, and cysteine 56/cysteine 68. 2 N-linked (GlcNAc...) asparagine glycosylation sites follow: asparagine 110 and asparagine 219. The disordered stretch occupies residues 231–254; sequence QMTGTGSGSGSGSGSSSGAAYLRY. Residues 233–245 show a composition bias toward gly residues; the sequence is TGTGSGSGSGSGS.

It belongs to the countin family.

The protein localises to the secreted. In terms of biological role, cell-counting factor that limits the minimum size of the multicellular structure. May up-regulate the expression of both gp24 and gp80, which mediate cell adhesion. The sequence is that of Countin-2 (ctnB) from Dictyostelium discoideum (Social amoeba).